An 86-amino-acid polypeptide reads, in one-letter code: Large ribosomal subunit protein bL27 (86 aa).

Residues 1–26 (MATKKAGGSSRNGRDSAGRRLGVKQS) form a disordered region.

It belongs to the bacterial ribosomal protein bL27 family.

In Rickettsia canadensis (strain McKiel), this protein is Large ribosomal subunit protein bL27.